Consider the following 464-residue polypeptide: MKNVLTPRQIVERLDQYIVGQEGAKRSVAIALRNRYRRFQLEDKLRDEITPKNILMIGPTGVGKTEIARRLAKLVGAPFVKVEATKFTEVGYVGRDVESMIRDLVETSVRLVKEEKMKGVKKQAEEQANQRIVELLVPAKKKTQAYKNPLEMLFGQQQENTDHQETSAEQDTLTERRRRMSHQLALGELEDHYVTVEVEEQTPQFFDMLQGSGMEQMGMNMQEMLGNMMPKKRKKRKLTVREARRVLTEEEAQKLIDMDEVTQEAVSKAEQLGIVFIDEIDKIAGKGQQSADVSREGVQRDILPIVEGSTVVTKYGPVSTDHMLFIGAGAFHVAKPSDLIPELQGRFPIRVELSNLTVDDFVRILVEPDNALLKQYAALLETEGIKIVFTDEAVHKIATIATEVNQETENIGARRLHTLLERLLEDLSFEAPDVNLEEIVITPEYVTEKLAAIAKNRDLSQYIL.

Residues Val-19, 61-66, Asp-278, Glu-342, and Arg-414 contribute to the ATP site; that span reads GVGKTE.

It belongs to the ClpX chaperone family. HslU subfamily. A double ring-shaped homohexamer of HslV is capped on each side by a ring-shaped HslU homohexamer. The assembly of the HslU/HslV complex is dependent on binding of ATP.

Its subcellular location is the cytoplasm. ATPase subunit of a proteasome-like degradation complex; this subunit has chaperone activity. The binding of ATP and its subsequent hydrolysis by HslU are essential for unfolding of protein substrates subsequently hydrolyzed by HslV. HslU recognizes the N-terminal part of its protein substrates and unfolds these before they are guided to HslV for hydrolysis. The polypeptide is ATP-dependent protease ATPase subunit HslU (Halalkalibacterium halodurans (strain ATCC BAA-125 / DSM 18197 / FERM 7344 / JCM 9153 / C-125) (Bacillus halodurans)).